The sequence spans 367 residues: MAVANPTTEQAILSEVRKQNRDRRALRFWLGFVLLALFCLVLVGGATRLTNSGLSITEWRPIHGVIPPLSAAEWEEEFRLYQRIPEFQQLNNSMTVDEFKGIFWWEWAHRLIARGIGVIFALPLLYFWLTGRIEKRLRWPLVGILALGGLQGFIGWWMVSSGLSVRTDVSQYRLATHLVMACLIFAGCMWIMRGLSPHSNDPAPARSSRGFAATIAIFALFQIYLGALVAGLDAGFSYNTWPLMDGALIPSDLLIQQPFWINAFENPKTVQFIHRIGAYTLFALTLINMVIALRAAPWTTHARRAVVLFSLVTLQAAIGIATLLMQVPLHWGLLHQAGALVVFGFAIANWRGFYGEYPHATAIAERG.

A run of 5 helical transmembrane segments spans residues 25-45 (ALRFWLGFVLLALFCLVLVGG), 111-131 (LIARGIGVIFALPLLYFWLTG), 139-159 (WPLVGILALGGLQGFIGWWMV), 174-194 (LATHLVMACLIFAGCMWIMRG), and 210-230 (GFAATIAIFALFQIYLGALVA). His-274 is a binding site for heme. 3 helical membrane-spanning segments follow: residues 276 to 296 (IGAYTLFALTLINMVIALRAA), 305 to 325 (AVVLFSLVTLQAAIGIATLLM), and 327 to 347 (VPLHWGLLHQAGALVVFGFAI). Residue His-335 participates in heme binding.

It belongs to the COX15/CtaA family. Type 2 subfamily. As to quaternary structure, interacts with CtaB. The cofactor is heme b.

It localises to the cell membrane. It carries out the reaction Fe(II)-heme o + 2 A + H2O = Fe(II)-heme a + 2 AH2. Its pathway is porphyrin-containing compound metabolism; heme A biosynthesis; heme A from heme O: step 1/1. Functionally, catalyzes the conversion of heme O to heme A by two successive hydroxylations of the methyl group at C8. The first hydroxylation forms heme I, the second hydroxylation results in an unstable dihydroxymethyl group, which spontaneously dehydrates, resulting in the formyl group of heme A. The chain is Heme A synthase from Rhizobium leguminosarum bv. trifolii (strain WSM2304).